The sequence spans 122 residues: Large ribosomal subunit protein uL14 (122 aa).

This sequence belongs to the universal ribosomal protein uL14 family. As to quaternary structure, part of the 50S ribosomal subunit. Forms a cluster with proteins L3 and L19. In the 70S ribosome, L14 and L19 interact and together make contacts with the 16S rRNA in bridges B5 and B8.

In terms of biological role, binds to 23S rRNA. Forms part of two intersubunit bridges in the 70S ribosome. This is Large ribosomal subunit protein uL14 from Pseudomonas aeruginosa (strain LESB58).